A 174-amino-acid polypeptide reads, in one-letter code: Eukaryotic translation elongation factor 1 epsilon-1 (174 aa).

Alanine 2 carries the N-acetylalanine modification. The tract at residues 2 to 56 (AAAAELSLLEKSLGLSKGNKYSAQGERQIPVLQTNNGPSLTGLTTIAAHLVKQAN) is N-terminal. The GST C-terminal domain occupies 50–173 (HLVKQANKEY…FIKNRLYTNS (124 aa)). Residues 57–63 (KEYLLGS) are linker. The tract at residues 64-152 (TAEEKAIVQQ…SRWFCHIQHY (89 aa)) is C-terminal. Lysine 138 carries the post-translational modification N6-acetyllysine. Residues 153 to 169 (PGIRQHLSSVVFIKNRL) are a coiled coil.

As to quaternary structure, part of a multisubunit complex that groups tRNA ligases for Arg (RARS1), Asp (DARS1), Gln (QARS1), Ile (IARS1), Leu (LARS1), Lys (KARS1), Met (MARS1) the bifunctional ligase for Glu and Pro (EPRS1) and the auxiliary subunits AIMP1/p43, AIMP2/p38 and EEF1E1/p18. Can interact simultaneously with MARS1 and EPRS1. Forms a linear complex that contains MARS1, EEF1E1, EPRS1 and AIMP2 that is at the core of the multisubunit complex. Interacts with ATM and ATR. The interaction with ATM, which takes place independently of TP53, is induced by DNA damage that may occur during genotoxic stress or cell growth. The interaction with ATR is enhanced by UV irradiation. In terms of tissue distribution, down-regulated in various cancer tissues.

The protein resides in the cytoplasm. It localises to the cytosol. The protein localises to the nucleus. In terms of biological role, positive modulator of ATM response to DNA damage. The protein is Eukaryotic translation elongation factor 1 epsilon-1 (EEF1E1) of Homo sapiens (Human).